A 361-amino-acid polypeptide reads, in one-letter code: Chorismate synthase (361 aa).

Residues arginine 48 and arginine 54 each contribute to the NADP(+) site. FMN-binding positions include 125–127 (RSS), 238–239 (NA), glycine 278, 293–297 (KPTSS), and arginine 319.

The protein belongs to the chorismate synthase family. As to quaternary structure, homotetramer. FMNH2 serves as cofactor.

The catalysed reaction is 5-O-(1-carboxyvinyl)-3-phosphoshikimate = chorismate + phosphate. It functions in the pathway metabolic intermediate biosynthesis; chorismate biosynthesis; chorismate from D-erythrose 4-phosphate and phosphoenolpyruvate: step 7/7. Catalyzes the anti-1,4-elimination of the C-3 phosphate and the C-6 proR hydrogen from 5-enolpyruvylshikimate-3-phosphate (EPSP) to yield chorismate, which is the branch point compound that serves as the starting substrate for the three terminal pathways of aromatic amino acid biosynthesis. This reaction introduces a second double bond into the aromatic ring system. This is Chorismate synthase from Proteus mirabilis (strain HI4320).